Consider the following 268-residue polypeptide: AN1-type zinc finger protein 1 (268 aa).

The residue at position 2 (alanine 2) is an N-acetylalanine. 2 consecutive AN1-type zinc fingers follow at residues 4 to 52 (LDIG…VVKE) and 58 to 106 (EHKS…VAKP). Residues cysteine 10, cysteine 15, cysteine 25, cysteine 28, cysteine 33, histidine 36, histidine 42, cysteine 44, cysteine 64, cysteine 69, cysteine 79, cysteine 82, cysteine 87, histidine 90, histidine 96, and cysteine 98 each contribute to the Zn(2+) site. A ubiquitin-like region spans residues 160–260 (QTERTYFQVY…EYLNDEEQFL (101 aa)).

In terms of assembly, associates with the 26S proteasome; this association occurs upon exposure to arsenite and is reduced in the presence of ATP. Interacts (via AN1-type 1 and 2 zinc fingers) with PSMD1; this interaction is increased upon arsenite treatment and occurs in an ATP-independent manner. Interacts with PSMC4. Interacts with PSMA1. Interacts (via its ubiquitin-like region) with VCP; this interaction occurs in an arsenite-dependent manner and is necessary for the recruitment of the ubiquitin-selective ATPase VCP to stress granules (SGs).

The protein resides in the cytoplasm. The protein localises to the stress granule. Its function is as follows. Plays a role in the regulation of cytoplasmic stress granules (SGs) turnover. SGs are dynamic and transient cytoplasmic ribonucleoprotein assemblies important for cellular protein homeostasis when protein production is suspended after acute exogenous stress. Associates with SGs and is involved in the efficient and specific arsenite-induced clearance process of SGs through the recruitment of the ubiquitin-selective ATPase VCP and the 26S proteasome. This process requires both complexes for efficient degradation of damaged ubiquitinated SG proteins during recovery from arsenite stress, and hence avoiding aberrant cytoplasmic SGs degradation via autophagy. The protein is AN1-type zinc finger protein 1 of Mus musculus (Mouse).